Here is a 785-residue protein sequence, read N- to C-terminus: Putative endonuclease MutS2 (785 aa).

335–342 (GPNTGGKT) contributes to the ATP binding site. Positions 513 to 586 (TAEHNEVDTM…AEKVKAAMKE (74 aa)) form a coiled coil. Positions 636–785 (KRDFKPGDEV…GSGVTVVELK (150 aa)) are partially complements a deletion for mitomycin C (MMC) resistance and for chromosomal DNA transformation. The segment at 641–681 (PGDEVKVLTFGQKGTLLEKTGGNEWNVQIGILKMKVKEKDL) is KOW region. One can recognise a Smr domain in the interval 710-785 (LDLRGERYEN…GSGVTVVELK (76 aa)).

Belongs to the DNA mismatch repair MutS family. MutS2 subfamily. In terms of assembly, binds to ribosomes as a homodimer. Binds to stalled/collided disomes, association is greater in (ribosome-targeted) antibiotic-treated cells (with increased stalling at specific mRNA sites). The clamp domain of one monomer binds the A-site finger, the 23S rRNA of the central protuberance and ribosomal protein uL5 of the leading (stalled) ribosome, while the other monomer binds in a gap between the ribosomal central protuberance and the L1 stalk of the leading ribosome.

Its subcellular location is the cytoplasm. Its function is as follows. Acts as a ribosome collision sensor splitting the ribosome into its 2 subunits. Detects stalled/collided disomes (pairs of ribosomes where the leading ribosome is stalled and a second ribosome has collided with it) which it binds and splits, by an ATP-hydrolysis driven conformational change. Does not seem to have endoribonuclease activity (in the context of ribosome stalling). Acts upstream of the ribosome quality control system (RQC), a ribosome-associated complex that mediates the extraction of incompletely synthesized nascent chains from stalled ribosomes and their subsequent degradation, probably generates substrates for RQC. Functionally, does not seem to be involved in mismatch repair or in the prevention of interspecific recombination during DNA transformation. Might be involved in homologous recombination. Putative endonuclease that may be involved in the suppression of homologous recombination and may therefore have a key role in the control of bacterial genetic diversity. This Bacillus subtilis (strain 168) protein is Putative endonuclease MutS2.